A 205-amino-acid chain; its full sequence is Probable GTP-binding protein EngB (205 aa).

The region spanning 22–194 (ELPEIAFAGR…WESILDLCEI (173 aa)) is the EngB-type G domain. GTP contacts are provided by residues 30–37 (GRSNVGKS), 57–61 (GRTQL), 75–78 (DLPG), 142–145 (TKAD), and 173–175 (FSA). Mg(2+) is bound by residues Ser37 and Thr59.

The protein belongs to the TRAFAC class TrmE-Era-EngA-EngB-Septin-like GTPase superfamily. EngB GTPase family. The cofactor is Mg(2+).

Necessary for normal cell division and for the maintenance of normal septation. This is Probable GTP-binding protein EngB from Desulfatibacillum aliphaticivorans.